Reading from the N-terminus, the 271-residue chain is Large ribosomal subunit protein uL2 (271 aa).

A disordered region spans residues 221 to 271; sequence RGVAMNPVDHPMGGGEGKSSGGHPRNRNGIPSNGFKTRNKKKITNKYIIKK. Positions 257–271 are enriched in basic residues; the sequence is TRNKKKITNKYIIKK.

This sequence belongs to the universal ribosomal protein uL2 family. As to quaternary structure, part of the 50S ribosomal subunit. Forms a bridge to the 30S subunit in the 70S ribosome.

Its function is as follows. One of the primary rRNA binding proteins. Required for association of the 30S and 50S subunits to form the 70S ribosome, for tRNA binding and peptide bond formation. It has been suggested to have peptidyltransferase activity; this is somewhat controversial. Makes several contacts with the 16S rRNA in the 70S ribosome. The polypeptide is Large ribosomal subunit protein uL2 (Karelsulcia muelleri (strain GWSS) (Sulcia muelleri)).